The following is a 139-amino-acid chain: Ribulose bisphosphate carboxylase small subunit (139 aa).

This sequence belongs to the RuBisCO small chain family. In terms of assembly, heterohexadecamer of 8 large and 8 small subunits.

The protein localises to the plastid. It is found in the chloroplast. RuBisCO catalyzes two reactions: the carboxylation of D-ribulose 1,5-bisphosphate, the primary event in carbon dioxide fixation, as well as the oxidative fragmentation of the pentose substrate in the photorespiration process. Both reactions occur simultaneously and in competition at the same active site. Although the small subunit is not catalytic it is essential for maximal activity. In Trieres chinensis (Marine centric diatom), this protein is Ribulose bisphosphate carboxylase small subunit.